The chain runs to 485 residues: Transcription factor E2FA (485 aa).

Low complexity predominate over residues methionine 1 to serine 11. Disordered stretches follow at residues methionine 1 to asparagine 69 and serine 114 to threonine 159. The span at serine 12–proline 26 shows a compositional bias: pro residues. Polar residues predominate over residues serine 114–glutamine 125. The segment covering lysine 129–glycine 141 has biased composition (basic residues). A compositionally biased stretch (polar residues) spans asparagine 142–threonine 159. A DNA-binding region spans residues arginine 167–glycine 232. Residues serine 245–tryptophan 286 are a coiled coil. The tract at residues leucine 249–leucine 277 is leucine-zipper. Residues aspartate 435–tryptophan 450 form a retinoblastoma protein binding region.

Belongs to the E2F/DP family. In terms of assembly, heterodimer with DP proteins. Interacts (via dimerization domain) preferentially with DPA, but also with DPB. Interacts with maize retinoblastoma-related protein RBR1. No interaction with E2FD. In terms of tissue distribution, highly expressed in the shoot apical meristem, emerging leaf primordia, and vascular tissues of young leaf primordia. Expressed in flowers, in epidermis and cortex of hypocotyls, and at lower levels in leaves.

The protein resides in the cytoplasm. It localises to the nucleus. In terms of biological role, transcription activator that binds DNA cooperatively with DP proteins through the E2 recognition site, 5'-TTTC[CG]CGC-3' found in the promoter region of a number of genes whose products are involved in cell cycle regulation or in DNA replication. The binding of retinoblastoma-related proteins represses transactivation. Regulates gene expression both positively and negatively. Activates the expression of E2FB. Involved in the control of cell-cycle progression from G1 to S phase. Stimulates cell proliferation and delays differentiation. This is Transcription factor E2FA (E2FA) from Arabidopsis thaliana (Mouse-ear cress).